Here is a 247-residue protein sequence, read N- to C-terminus: NADH-ubiquinone oxidoreductase chain 6 (247 aa).

5 consecutive transmembrane segments (helical) span residues 18–38 (TMILSVLSSPALVSGLMVVRA), 44–64 (SVLFPILVFCDTSGLLILLGL), 70–90 (ISPVVHIGAIAVSFLFVVMMF), 104–124 (YLPVSGIIGLIFWWEMFFILD), and 168–188 (VWFLVSSLILLVAMIGAIVLT).

The protein belongs to the complex I subunit 6 family.

The protein localises to the mitochondrion membrane. The catalysed reaction is a ubiquinone + NADH + 5 H(+)(in) = a ubiquinol + NAD(+) + 4 H(+)(out). Its function is as follows. Core subunit of the mitochondrial membrane respiratory chain NADH dehydrogenase (Complex I) that is believed to belong to the minimal assembly required for catalysis. Complex I functions in the transfer of electrons from NADH to the respiratory chain. The immediate electron acceptor for the enzyme is believed to be ubiquinone. This Triticum aestivum (Wheat) protein is NADH-ubiquinone oxidoreductase chain 6 (ND6).